Consider the following 139-residue polypeptide: Nucleoside diphosphate kinase (139 aa).

ATP is bound by residues Lys9, Phe57, Arg85, Thr91, Arg102, and Asn112. Residue His115 is the Pros-phosphohistidine intermediate of the active site.

It belongs to the NDK family. In terms of assembly, homotetramer. The cofactor is Mg(2+).

It localises to the cytoplasm. The enzyme catalyses a 2'-deoxyribonucleoside 5'-diphosphate + ATP = a 2'-deoxyribonucleoside 5'-triphosphate + ADP. It catalyses the reaction a ribonucleoside 5'-diphosphate + ATP = a ribonucleoside 5'-triphosphate + ADP. Major role in the synthesis of nucleoside triphosphates other than ATP. The ATP gamma phosphate is transferred to the NDP beta phosphate via a ping-pong mechanism, using a phosphorylated active-site intermediate. The protein is Nucleoside diphosphate kinase of Neorickettsia sennetsu (strain ATCC VR-367 / Miyayama) (Ehrlichia sennetsu).